Here is a 193-residue protein sequence, read N- to C-terminus: 21 kDa protein (193 aa).

Positions 1-22 are cleaved as a signal peptide; the sequence is MKLSKSTLVFSALLVILAAASA.

The polypeptide is 21 kDa protein (Daucus carota (Wild carrot)).